The following is a 278-amino-acid chain: TATA box-binding protein-associated factor RNA polymerase I subunit D (278 aa).

Disordered regions lie at residues 19–71 (LANR…SSFE) and 88–115 (KKRY…RRNP). Ser-23 bears the Phosphoserine mark. 2 stretches are compositionally biased toward basic residues: residues 43–53 (REKRNPIRKFV) and 88–99 (KKRYKKKKKKRY). A phosphoserine mark is found at Ser-138 and Ser-234.

As to quaternary structure, component of the transcription factor SL1/TIF-IB complex, composed of TBP and at least TAF1A, TAF1B, TAF1C and TAF1D. Interacts with UBTF.

It localises to the nucleus. Functionally, component of the transcription factor SL1/TIF-IB complex, which is involved in the assembly of the PIC (preinitiation complex) during RNA polymerase I-dependent transcription. The rate of PIC formation probably is primarily dependent on the rate of association of SL1/TIF-IB with the rDNA promoter. SL1/TIF-IB is involved in stabilization of nucleolar transcription factor 1/UBTF on rDNA. Formation of SL1/TIF-IB excludes the association of TBP with TFIID subunits. This chain is TATA box-binding protein-associated factor RNA polymerase I subunit D (TAF1D), found in Pongo abelii (Sumatran orangutan).